A 144-amino-acid polypeptide reads, in one-letter code: Small ribosomal subunit protein eS19A (144 aa).

This sequence belongs to the eukaryotic ribosomal protein eS19 family. Component of the small ribosomal subunit (SSU). Mature yeast ribosomes consist of a small (40S) and a large (60S) subunit. The 40S small subunit contains 1 molecule of ribosomal RNA (18S rRNA) and 33 different proteins (encoded by 57 genes). The large 60S subunit contains 3 rRNA molecules (25S, 5.8S and 5S rRNA) and 46 different proteins (encoded by 81 genes).

It is found in the cytoplasm. Its function is as follows. Component of the ribosome, a large ribonucleoprotein complex responsible for the synthesis of proteins in the cell. The small ribosomal subunit (SSU) binds messenger RNAs (mRNAs) and translates the encoded message by selecting cognate aminoacyl-transfer RNA (tRNA) molecules. The large subunit (LSU) contains the ribosomal catalytic site termed the peptidyl transferase center (PTC), which catalyzes the formation of peptide bonds, thereby polymerizing the amino acids delivered by tRNAs into a polypeptide chain. The nascent polypeptides leave the ribosome through a tunnel in the LSU and interact with protein factors that function in enzymatic processing, targeting, and the membrane insertion of nascent chains at the exit of the ribosomal tunnel. eS19 is required for proper maturation of the small (40S) ribosomal subunit. Binds to 40S pre-ribosomal particles, probably required after association of NOC4 but before association of ENP1, TSR1 and RIO2 with 20/21S pre-rRNA. This Saccharomyces cerevisiae (strain ATCC 204508 / S288c) (Baker's yeast) protein is Small ribosomal subunit protein eS19A.